Here is a 100-residue protein sequence, read N- to C-terminus: Large ribosomal subunit protein uL23 (100 aa).

The protein belongs to the universal ribosomal protein uL23 family. Part of the 50S ribosomal subunit. Contacts protein L29, and trigger factor when it is bound to the ribosome.

Its function is as follows. One of the early assembly proteins it binds 23S rRNA. One of the proteins that surrounds the polypeptide exit tunnel on the outside of the ribosome. Forms the main docking site for trigger factor binding to the ribosome. This chain is Large ribosomal subunit protein uL23, found in Parasynechococcus marenigrum (strain WH8102).